We begin with the raw amino-acid sequence, 592 residues long: Probable translation initiation factor IF-2 (592 aa).

The region spanning 5 to 226 is the tr-type G domain; the sequence is IRSPFVVVMG…AGVSQRFIPR (222 aa). Residues 14–21 form a G1 region; the sequence is GHVDVGKT. Residue 14-21 coordinates GTP; it reads GHVDVGKT. The tract at residues 39–43 is G2; the sequence is MITQH. A G3 region spans residues 80–83; the sequence is DTPG. Residues 80–84 and 134–137 contribute to the GTP site; these read DTPGH and NKLD. The G4 stretch occupies residues 134–137; that stretch reads NKLD. Positions 202-204 are G5; sequence SAV.

It belongs to the TRAFAC class translation factor GTPase superfamily. Classic translation factor GTPase family. IF-2 subfamily.

Functionally, function in general translation initiation by promoting the binding of the formylmethionine-tRNA to ribosomes. Seems to function along with eIF-2. This Pyrobaculum calidifontis (strain DSM 21063 / JCM 11548 / VA1) protein is Probable translation initiation factor IF-2.